A 256-amino-acid chain; its full sequence is DNA polymerase sliding clamp 2 (256 aa).

Belongs to the PCNA family. Homotrimer. The subunits circularize to form a toroid; DNA passes through its center. Replication factor C (RFC) is required to load the toroid on the DNA.

Its function is as follows. Sliding clamp subunit that acts as a moving platform for DNA processing. Responsible for tethering the catalytic subunit of DNA polymerase and other proteins to DNA during high-speed replication. This is DNA polymerase sliding clamp 2 from Pyrobaculum aerophilum (strain ATCC 51768 / DSM 7523 / JCM 9630 / CIP 104966 / NBRC 100827 / IM2).